The chain runs to 645 residues: MSLAASAGRGPGTMWSPTHVQVTVLQARGLRAKGPGGTSDAYAVIQVGKEKYATSVSERSLGAPVWREEATFELPPLLSSGAAPAAAATLQLTVLHRALLGLDKFLGRAEVDLRELHRDQGRRKKQWYTLKSKPGKKDKERGEIEVDIQFMRNNMTASMFDLSMKDKSRNPFGKLKDKIKGKNKDSASDTASAIVPSVTPSVDSDDESFSKDKKKKSKIKTLFSKSSLQKTPLSQSMSVLPTSKSDKVLLRAGDFQSQWDDDAHEDESSSASDVMSHKRTSSTDQQPNQSNFSLPKKEGLSFLGGLRSKNDSLSRSTVCINGNHVYMEQPEARSEIRESSPSNSPSPQGFRRKHLFSSTENLAARSPKEPGEGGGTSSDRRLSDSSTKDSMKSMSLPSYRPLTSGDNRESMSPANVEAARETKDSKKQESKKSSLLSLVTGKRDAAAKGSESEPLPTVSEKEKERKGALVEAQLREEDLMRRPEKDALPVASQWGSSLNPFEDVQISDPGATTESRSEPKPPVPAARVPQTKAVKPRPHPVKPMNTTATKIANSSLGTATIITENLISEALMKKYQPSDPAFAYAQLTHDELIQLVLKQKETISKKEFQVRELEDYIDNLLVRVMEETPNILRVPAQMGKKAGKM.

Residues 1-128 enclose the C2 domain; the sequence is MSLAASAGRG…DQGRRKKQWY (128 aa). The span at 171–187 shows a compositional bias: basic and acidic residues; it reads PFGKLKDKIKGKNKDSA. The segment at 171–215 is disordered; it reads PFGKLKDKIKGKNKDSASDTASAIVPSVTPSVDSDDESFSKDKKK. Phosphoserine occurs at positions 186, 204, 208, and 236. A disordered region spans residues 259–296; sequence WDDDAHEDESSSASDVMSHKRTSSTDQQPNQSNFSLPK. Residues 282–293 are compositionally biased toward polar residues; it reads STDQQPNQSNFS. 9 positions are modified to phosphoserine: S301, S316, S340, S342, S344, S346, S357, S358, and S383. Residues 330-545 are disordered; sequence PEARSEIRES…PRPHPVKPMN (216 aa). Composition is skewed to basic and acidic residues over residues 378 to 391 and 418 to 432; these read SDRRLSDSSTKDSM and AARETKDSKKQESKK. At S434 the chain carries Phosphoserine. Over residues 459–487 the composition is skewed to basic and acidic residues; the sequence is SEKEKERKGALVEAQLREEDLMRRPEKDA. The FIP-RBD domain maps to 573 to 635; that stretch reads KKYQPSDPAF…EETPNILRVP (63 aa). The necessary for interaction with RAB4A and RAB11A, subcellular location and endosomal recycling stretch occupies residues 581–645; it reads AFAYAQLTHD…AQMGKKAGKM (65 aa).

Homooligomer. Interacts with RAB11A, RAB11B, RAB25, RAB4A and RAB14.

It localises to the recycling endosome. The protein resides in the cytoplasmic vesicle. Functionally, a Rab11 effector protein involved in the endosomal recycling process. Also involved in controlling membrane trafficking along the phagocytic pathway and in phagocytosis. Interaction with RAB14 may function in the process of neurite formation. This is Rab11 family-interacting protein 1 (Rab11fip1) from Mus musculus (Mouse).